A 377-amino-acid polypeptide reads, in one-letter code: Succinyl-diaminopimelate desuccinylase (377 aa).

H68 serves as a coordination point for Zn(2+). D70 is a catalytic residue. Residue D101 coordinates Zn(2+). The active-site Proton acceptor is E135. Residues E136, E164, and H350 each coordinate Zn(2+).

It belongs to the peptidase M20A family. DapE subfamily. In terms of assembly, homodimer. Requires Zn(2+) as cofactor. The cofactor is Co(2+).

The catalysed reaction is N-succinyl-(2S,6S)-2,6-diaminopimelate + H2O = (2S,6S)-2,6-diaminopimelate + succinate. Its pathway is amino-acid biosynthesis; L-lysine biosynthesis via DAP pathway; LL-2,6-diaminopimelate from (S)-tetrahydrodipicolinate (succinylase route): step 3/3. Its function is as follows. Catalyzes the hydrolysis of N-succinyl-L,L-diaminopimelic acid (SDAP), forming succinate and LL-2,6-diaminopimelate (DAP), an intermediate involved in the bacterial biosynthesis of lysine and meso-diaminopimelic acid, an essential component of bacterial cell walls. The protein is Succinyl-diaminopimelate desuccinylase of Vibrio cholerae serotype O1 (strain ATCC 39541 / Classical Ogawa 395 / O395).